Consider the following 1992-residue polypeptide: Otoferlin (1992 aa).

C2 domains lie at 1-98, 241-362, and 405-536; these read MALV…EVSD, KRSK…HKWA, and IEGN…FLPT. The Cytoplasmic segment spans residues 1–1958; that stretch reads MALVVHLKTV…IRYFIWHNYR (1958 aa). The tract at residues 655–699 is disordered; sequence PALAKKKKEGGGESEEEESELIHNSSEEEAEDDGDLTSVPSTPPM. C2 domains are found at residues 952 to 1077 and 1124 to 1250; these read IQAV…PPRF and RGPI…NNWA. Asp-984, Asp-990, Asp-1046, and Asp-1048 together coordinate Ca(2+). A coiled-coil region spans residues 1282-1363; sequence VKVDLNEDEK…ESAEIKADDF (82 aa). 2 disordered regions span residues 1288–1311 and 1354–1399; these read EDEK…EEEP and ESAE…KPKV. Over residues 1356–1399 the composition is skewed to basic and acidic residues; it reads AEIKADDFPMKGTKPKEKSKDKKSTKDKKKNNDGTEKRPPKPKV. 2 consecutive C2 domains span residues 1470–1588 and 1711–1860; these read DPNM…ATCG and PAPG…KQCS. Residues Asp-1503, Asp-1509, Asp-1558, Asp-1560, Asp-1566, Asp-1831, Ser-1834, and Asp-1837 each contribute to the Ca(2+) site. A helical membrane pass occupies residues 1959 to 1979; that stretch reads WLILKALALLLLLLLVGLFLY. Residues 1980 to 1992 are Extracellular-facing; that stretch reads SIPGYLVKKLLGA.

This sequence belongs to the ferlin family. Ca(2+) is required as a cofactor.

It localises to the cytoplasmic vesicle. The protein resides in the secretory vesicle. The protein localises to the synaptic vesicle membrane. Its subcellular location is the basolateral cell membrane. It is found in the endoplasmic reticulum membrane. It localises to the golgi apparatus membrane. The protein resides in the presynaptic cell membrane. The protein localises to the cell membrane. In terms of biological role, key calcium ion sensor involved in the Ca(2+)-triggered synaptic vesicle-plasma membrane fusion and in the control of neurotransmitter release at these output synapses. The chain is Otoferlin (otof) from Danio rerio (Zebrafish).